The chain runs to 272 residues: NH(3)-dependent NAD(+) synthetase (272 aa).

45-52 (GISGGQDS) contacts ATP. Aspartate 51 serves as a coordination point for Mg(2+). Arginine 138 is a deamido-NAD(+) binding site. Threonine 158 is an ATP binding site. Glutamate 163 serves as a coordination point for Mg(2+). 2 residues coordinate deamido-NAD(+): lysine 171 and aspartate 178. The ATP site is built by lysine 187 and threonine 209. 258–259 (HK) is a deamido-NAD(+) binding site.

The protein belongs to the NAD synthetase family. Homodimer.

It catalyses the reaction deamido-NAD(+) + NH4(+) + ATP = AMP + diphosphate + NAD(+) + H(+). It participates in cofactor biosynthesis; NAD(+) biosynthesis; NAD(+) from deamido-NAD(+) (ammonia route): step 1/1. Its function is as follows. Catalyzes the ATP-dependent amidation of deamido-NAD to form NAD. Uses ammonia as a nitrogen source. The protein is NH(3)-dependent NAD(+) synthetase of Bacillus cereus (strain Q1).